The primary structure comprises 67 residues: Protein C' (67 aa).

The protein belongs to the rhabdoviruses C protein family.

Functionally, seems to stimulates transcription by the viral polymerase. May play a role in viral pathogenesis or transmission by insects vectors. The chain is Protein C' (P) from Aedes (Bovine).